Here is a 450-residue protein sequence, read N- to C-terminus: Probable ECA polymerase (450 aa).

Helical transmembrane passes span 6-26 (FSGL…LTWF), 37-57 (VFFS…TSVL), 63-83 (VGVA…CFYA), 118-138 (VILM…NGFL), 155-175 (GVAL…VYFL), 181-201 (AWLF…MIVG), 207-227 (IIIA…ISLW), 228-248 (MLAA…LKRY), 341-361 (LVVM…GLII), 378-398 (YKAA…IVLA), and 410-430 (VFFI…YWLF).

This sequence belongs to the WzyE family. Probably part of a complex composed of WzxE, WzyE and WzzE.

The protein resides in the cell inner membrane. It functions in the pathway bacterial outer membrane biogenesis; enterobacterial common antigen biosynthesis. Functionally, probably involved in the polymerization of enterobacterial common antigen (ECA) trisaccharide repeat units. In Shigella sonnei (strain Ss046), this protein is Probable ECA polymerase.